The sequence spans 152 residues: Putative pre-16S rRNA nuclease (152 aa).

Belongs to the YqgF nuclease family.

The protein localises to the cytoplasm. In terms of biological role, could be a nuclease involved in processing of the 5'-end of pre-16S rRNA. The chain is Putative pre-16S rRNA nuclease from Sphingopyxis alaskensis (strain DSM 13593 / LMG 18877 / RB2256) (Sphingomonas alaskensis).